Here is a 76-residue protein sequence, read N- to C-terminus: Protein OPG128 (76 aa).

Residues Cys17 and Cys21 are joined by a disulfide bond.

This sequence belongs to the orthopoxvirus OPG128 family. Interacts with sulfhydryl oxidase OPG072; this interaction involves formation of a transient disulfide-bonded intermediate, allowing disulfide bond transfer. Interacts with OPG088; this interaction involves formation of a transient disulfide-bonded intermediate, allowing disulfide bond transfer.

Its function is as follows. Late protein which probably participates in disulfide bond formation by functioning as a thiol-disulfide transfer protein between membrane-associated OPG072 and OPG08. The complete pathway for formation of disulfide bonds in intracellular virion membrane proteins sequentially involves oxidation of OPG072, OPG128 and OPG08. This is Protein OPG128 (OPG128) from Homo sapiens (Human).